The primary structure comprises 229 residues: DNA mismatch repair protein MutH (229 aa).

The protein belongs to the MutH family.

The protein localises to the cytoplasm. Sequence-specific endonuclease that cleaves unmethylated GATC sequences. It is involved in DNA mismatch repair. In Shigella boydii serotype 18 (strain CDC 3083-94 / BS512), this protein is DNA mismatch repair protein MutH.